A 793-amino-acid chain; its full sequence is Serine/threonine-protein phosphatase 1 regulatory subunit GAC1 (793 aa).

Positions 1–10 are enriched in polar residues; it reads MVIQTATTLS. Residues 1-20 are disordered; that stretch reads MVIQTATTLSPAKARPSFPH. Residues 235-360 form the CBM21 domain; it reads TKYLNGQNVK…NNNGKNYHLF (126 aa). Phosphoserine occurs at positions 415 and 424. Disordered regions lie at residues 450 to 491 and 616 to 671; these read LENA…SIDL and TTMD…LNDH. Residues 623–633 show a composition bias toward polar residues; it reads KTSTINNSTDT. The segment covering 637 to 648 has biased composition (basic and acidic residues); the sequence is PSKENGTVKENK. The span at 649 to 665 shows a compositional bias: low complexity; the sequence is SSANSTSAPSSSQNRAS.

Regulates the activity of glycogen synthase. It is most probably a regulatory subunit for protein phosphatase type 1. The sequence is that of Serine/threonine-protein phosphatase 1 regulatory subunit GAC1 (GAC1) from Saccharomyces cerevisiae (strain ATCC 204508 / S288c) (Baker's yeast).